A 1009-amino-acid chain; its full sequence is Translation initiation factor IF-2 (1009 aa).

The disordered stretch occupies residues Met1 to Gly415. Positions Glu94–Gln110 are enriched in basic and acidic residues. Over residues Ala111 to Glu121 the composition is skewed to low complexity. Positions Ala122–Ala136 are enriched in basic and acidic residues. Residues Ala137–Ala146 are compositionally biased toward low complexity. Residues Ala147–Pro174 show a composition bias toward pro residues. Low complexity predominate over residues Arg175–Gln189. Basic and acidic residues-rich tracts occupy residues Glu208–Pro218 and Pro251–Gly287. Residues Gly311–Gly320 show a composition bias toward pro residues. Basic and acidic residues-rich tracts occupy residues Met346–Lys358 and Arg403–Gly415. The region spanning Leu505–Lys675 is the tr-type G domain. The tract at residues Gly514–Thr521 is G1. A GTP-binding site is contributed by Gly514–Thr521. Residues Gly539 to His543 are G2. The segment at Asp561 to Gly564 is G3. GTP is bound by residues Asp561 to His565 and Asn615 to Asp618. A G4 region spans residues Asn615–Asp618. The G5 stretch occupies residues Ser651–Lys653.

The protein belongs to the TRAFAC class translation factor GTPase superfamily. Classic translation factor GTPase family. IF-2 subfamily.

Its subcellular location is the cytoplasm. In terms of biological role, one of the essential components for the initiation of protein synthesis. Protects formylmethionyl-tRNA from spontaneous hydrolysis and promotes its binding to the 30S ribosomal subunits. Also involved in the hydrolysis of GTP during the formation of the 70S ribosomal complex. The sequence is that of Translation initiation factor IF-2 from Caulobacter vibrioides (strain ATCC 19089 / CIP 103742 / CB 15) (Caulobacter crescentus).